Here is a 144-residue protein sequence, read N- to C-terminus: Large ribosomal subunit protein uL15 (144 aa).

Residues 1–18 show a composition bias toward basic and acidic residues; it reads MRLNDLHPAEGSRPEGKR. The tract at residues 1–58 is disordered; sequence MRLNDLHPAEGSRPEGKRVGRGIGSGLGKTGGRGHKGQKSRSGGSVKPGFEGGQMPLQ. Gly residues predominate over residues 21–31; it reads RGIGSGLGKTG.

It belongs to the universal ribosomal protein uL15 family. Part of the 50S ribosomal subunit.

Functionally, binds to the 23S rRNA. The protein is Large ribosomal subunit protein uL15 of Alcanivorax borkumensis (strain ATCC 700651 / DSM 11573 / NCIMB 13689 / SK2).